The chain runs to 491 residues: Argininosuccinate lyase (491 aa).

It belongs to the lyase 1 family. Argininosuccinate lyase subfamily.

The protein resides in the cytoplasm. It carries out the reaction 2-(N(omega)-L-arginino)succinate = fumarate + L-arginine. It functions in the pathway amino-acid biosynthesis; L-arginine biosynthesis; L-arginine from L-ornithine and carbamoyl phosphate: step 3/3. This is Argininosuccinate lyase from Methanosarcina acetivorans (strain ATCC 35395 / DSM 2834 / JCM 12185 / C2A).